A 313-amino-acid chain; its full sequence is D-apiose import binding protein (313 aa).

The first 26 residues, 1 to 26 (MKLTRRLTLAAFASALALGTAMPAFA), serve as a signal peptide directing secretion. D-apiofuranose is bound by residues asparagine 39, 115–116 (DR), 162–164 (DTN), arginine 168, asparagine 218, aspartate 243, and glutamine 263.

It belongs to the bacterial solute-binding protein 2 family.

It localises to the periplasm. In terms of biological role, part of an ABC transporter complex involved in D-apiose import. Binds D-apiose, D-ribose and D-ribulose. The protein is D-apiose import binding protein of Rhizobium etli (strain ATCC 51251 / DSM 11541 / JCM 21823 / NBRC 15573 / CFN 42).